Here is a 1007-residue protein sequence, read N- to C-terminus: Serine/threonine-protein kinase PRP4 homolog (1007 aa).

A compositionally biased stretch (polar residues) spans 1 to 10 (MAAAETQSLR). The tract at residues 1-99 (MAAAETQSLR…EGMSPAKRTK (99 aa)) is disordered. An N-acetylalanine modification is found at Ala2. Phosphoserine is present on residues Ser8, Ser20, Ser23, and Ser32. 2 stretches are compositionally biased toward basic residues: residues 39–59 (KHSRHKKKKHKHRSKHKKHKH) and 67–81 (KKHKHKHKHKKHKRK). Residues 82 to 91 (EVIDASDKEG) are compositionally biased toward basic and acidic residues. 2 positions are modified to phosphoserine: Ser87 and Ser93. Lys99 bears the N6-acetyllysine; alternate mark. Residue Lys99 forms a Glycyl lysine isopeptide (Lys-Gly) (interchain with G-Cter in SUMO2); alternate linkage. Lys111 participates in a covalent cross-link: Glycyl lysine isopeptide (Lys-Gly) (interchain with G-Cter in SUMO2). Lys117 is covalently cross-linked (Glycyl lysine isopeptide (Lys-Gly) (interchain with G-Cter in SUMO2); alternate). Lys117 is covalently cross-linked (Glycyl lysine isopeptide (Lys-Gly) (interchain with G-Cter in SUMO1); alternate). The residue at position 131 (Ser131) is a Phosphoserine. At Tyr140 the chain carries Phosphotyrosine. Disordered stretches follow at residues 140-533 (YESG…EEED) and 559-583 (SNMSVPSEPSSPQSSTRTRSPSPDD). Phosphoserine occurs at positions 142, 144, and 166. The span at 157-168 (GNRSSTRSSSTK) shows a compositional bias: low complexity. Glycyl lysine isopeptide (Lys-Gly) (interchain with G-Cter in SUMO2) cross-links involve residues Lys170 and Lys177. Basic residues-rich tracts occupy residues 179 to 202 (TTKKRSKSRSKERTRHRSDKKKSK) and 214 to 230 (RSKSKERKKSKSPSKRS). Phosphoserine is present on residues Ser239, Ser241, Ser257, Ser277, Ser283, Ser292, and Ser294. Over residues 247–270 (RSQEKIGKARSPTDDKVKIEDKSK) the composition is skewed to basic and acidic residues. Positions 302–315 (SKDRRSRSKERKSK) are enriched in basic residues. Residues 316–325 (RSETDKEKKP) are compositionally biased toward basic and acidic residues. Phosphoserine occurs at positions 328, 354, 356, 366, and 368. Over residues 342–367 (PSRRPGRSPKRRSLSPKPRDKSRRSR) the composition is skewed to basic residues. Thr385 bears the Phosphothreonine mark. Ser387 is modified (phosphoserine). Composition is skewed to basic and acidic residues over residues 395 to 408 (RSLERKRREPERRR) and 415 to 429 (RPRDDILSRRERSKD). Phosphoserine is present on residues Ser427, Ser431, and Ser437. Over residues 438–497 (PTRRRSRSPIRRRSRSPLRRSRSPRRRSRSPRRRDRGRRSRSRLRRRSRSRGGRRRRSRS) the composition is skewed to basic residues. Phosphoserine occurs at positions 518, 519, 520, 565, 569, 578, and 580. Acidic residues predominate over residues 518–533 (SSSDDNLEDFDVEEED). Over residues 562–581 (SVPSEPSSPQSSTRTRSPSP) the composition is skewed to low complexity. Glycyl lysine isopeptide (Lys-Gly) (interchain with G-Cter in SUMO2) cross-links involve residues Lys593 and Lys659. Residues 687-1003 (YNVYGYTGQG…INQALQHAFI (317 aa)) enclose the Protein kinase domain. ATP contacts are provided by residues 693–701 (TGQGVFSNV) and Lys717. Position 717 is an N6-acetyllysine (Lys717). Asp815 (proton acceptor) is an active-site residue. Tyr849 carries the post-translational modification Phosphotyrosine. A Phosphoserine modification is found at Ser852.

This sequence belongs to the protein kinase superfamily. CMGC Ser/Thr protein kinase family. As to quaternary structure, interacts with CLK1 C-terminus. Associates with the U5 snRNP and NCOR1 deacetylase complexes. Identified in the spliceosome C complex. Post-translationally, phosphorylated by CLK1. Autophosphorylated; phosphorylation inhibits interaction with its targets, such as PRPF6 or SMARCA4.

Its subcellular location is the nucleus. The protein localises to the chromosome. It is found in the centromere. The protein resides in the kinetochore. It catalyses the reaction L-seryl-[protein] + ATP = O-phospho-L-seryl-[protein] + ADP + H(+). The enzyme catalyses L-threonyl-[protein] + ATP = O-phospho-L-threonyl-[protein] + ADP + H(+). In terms of biological role, serine/threonine kinase involved in spliceosomal assembly as well as mitosis and signaling regulation. Connects chromatin mediated regulation of transcription and pre-mRNA splicing. During spliceosomal assembly, interacts with and phosphorylates PRPF6 and PRPF31, components of the U4/U6-U5 tri-small nuclear ribonucleoprotein (snRNP), to facilitate the formation of the spliceosome B complex. Plays a role in regulating transcription and the spindle assembly checkpoint (SAC). Associates with U5 snRNP and NCOR1 deacetylase complexes which may allow a coordination of pre-mRNA splicing with chromatin remodeling events involved in transcriptional regulation. Associates and probably phosphorylates SMARCA4 and NCOR1. Phosphorylates SRSF1. Associates with kinetochores during mitosis and is necessary for recruitment and maintenance of the checkpoint proteins such as MAD1L1 and MAD12L1 at the kinetochores. Phosphorylates and regulates the activity of the transcription factors such as ELK1 and KLF13. Phosphorylates nuclear YAP1 and WWTR1/TAZ which induces nuclear exclusion and regulates Hippo signaling pathway, involved in tissue growth control. This chain is Serine/threonine-protein kinase PRP4 homolog (PRP4K), found in Pongo abelii (Sumatran orangutan).